The chain runs to 362 residues: Photosystem II protein D1 3 (362 aa).

3 helical membrane-spanning segments follow: residues Y29–I46, H118–L133, and W142–A156. Position 118 (H118) interacts with chlorophyll a. Y126 contributes to the pheophytin a binding site. D170 and E189 together coordinate [CaMn4O5] cluster. A helical transmembrane segment spans residues F197–L218. H198 lines the chlorophyll a pocket. A quinone is bound by residues H215 and A264 to F265. H215 serves as a coordination point for Fe cation. Position 274 (H274) interacts with Fe cation. The helical transmembrane segment at I276 to L290 threads the bilayer. Positions 334, 335, 344, and 346 each coordinate [CaMn4O5] cluster. A propeptide spanning residues G347 to G362 is cleaved from the precursor.

This sequence belongs to the reaction center PufL/M/PsbA/D family. As to quaternary structure, PSII is composed of 1 copy each of membrane proteins PsbA, PsbB, PsbC, PsbD, PsbE, PsbF, PsbH, PsbI, PsbJ, PsbK, PsbL, PsbM, PsbT, PsbX, Psb30/Ycf12, peripheral proteins PsbO, CyanoQ (PsbQ), PsbU, PsbV and a large number of cofactors. It forms dimeric complexes. The D1/D2 heterodimer binds P680, chlorophylls that are the primary electron donor of PSII, and subsequent electron acceptors. It shares a non-heme iron and each subunit binds pheophytin, quinone, additional chlorophylls, carotenoids and lipids. D1 provides most of the ligands for the Mn4-Ca-O5 cluster of the oxygen-evolving complex (OEC). There is also a Cl(-1) ion associated with D1 and D2, which is required for oxygen evolution. The PSII complex binds additional chlorophylls, carotenoids and specific lipids. serves as cofactor. Post-translationally, tyr-161 forms a radical intermediate that is referred to as redox-active TyrZ, YZ or Y-Z. In terms of processing, C-terminally processed by CtpA; processing is essential to allow assembly of the oxygen-evolving complex and thus photosynthetic growth.

The protein resides in the cell inner membrane. The enzyme catalyses 2 a plastoquinone + 4 hnu + 2 H2O = 2 a plastoquinol + O2. Its function is as follows. Photosystem II (PSII) is a light-driven water:plastoquinone oxidoreductase that uses light energy to abstract electrons from H(2)O, generating O(2) and a proton gradient subsequently used for ATP formation. It consists of a core antenna complex that captures photons, and an electron transfer chain that converts photonic excitation into a charge separation. The D1/D2 (PsbA/PsbD) reaction center heterodimer binds P680, the primary electron donor of PSII as well as several subsequent electron acceptors. This Gloeobacter violaceus (strain ATCC 29082 / PCC 7421) protein is Photosystem II protein D1 3.